The following is a 124-amino-acid chain: Small ribosomal subunit protein bS6 (124 aa).

Belongs to the bacterial ribosomal protein bS6 family.

Its function is as follows. Binds together with bS18 to 16S ribosomal RNA. This is Small ribosomal subunit protein bS6 from Actinobacillus pleuropneumoniae serotype 7 (strain AP76).